We begin with the raw amino-acid sequence, 230 residues long: Secretory carrier-associated membrane protein 4 (230 aa).

Over methionine 1–arginine 39 the chain is Cytoplasmic. Transmembrane regions (helical) follow at residues isoleucine 40–alanine 60, tryptophan 61–phenylalanine 81, methionine 106–phenylalanine 126, and valine 149–isoleucine 169. The Cytoplasmic portion of the chain corresponds to valine 170–proline 230. Threonine 194 is subject to Phosphothreonine.

This sequence belongs to the SCAMP family.

The protein resides in the membrane. In terms of biological role, probably involved in membrane protein trafficking. The sequence is that of Secretory carrier-associated membrane protein 4 (Scamp4) from Mus musculus (Mouse).